We begin with the raw amino-acid sequence, 270 residues long: MYFVLSPAKSLNEKDAVSVKVGNYYSQPELIEDAQALMKILKSKEPIDLQALMSISDDLAQLNAQRNQDWAWSEDKPFTEDNAKPAGYLFDGDVYTGLDMYSADKQTVVYLNEHLGILSGLYGVLKPLDMIQPYRLEMGTKLKNEQGDNLYEFWGEHITDVINQRMKDTSEQGEDNILINLASNEYFKAVKKKSLDAAIITPRFEDEKNGKYKVISFYAKKARGLMVRYAADNKITKAEDLKQFDLAGYYYVDELSDDKTWVFRRDEASQ.

Belongs to the UPF0246 family.

This chain is UPF0246 protein PsycPRwf_0637, found in Psychrobacter sp. (strain PRwf-1).